The following is a 456-amino-acid chain: 3-isopropylmalate dehydratase large subunit (456 aa).

Residues Cys-336, Cys-396, and Cys-399 each contribute to the [4Fe-4S] cluster site.

The protein belongs to the aconitase/IPM isomerase family. LeuC type 1 subfamily. In terms of assembly, heterodimer of LeuC and LeuD. The cofactor is [4Fe-4S] cluster.

The enzyme catalyses (2R,3S)-3-isopropylmalate = (2S)-2-isopropylmalate. The protein operates within amino-acid biosynthesis; L-leucine biosynthesis; L-leucine from 3-methyl-2-oxobutanoate: step 2/4. Its function is as follows. Catalyzes the isomerization between 2-isopropylmalate and 3-isopropylmalate, via the formation of 2-isopropylmaleate. This is 3-isopropylmalate dehydratase large subunit from Staphylococcus epidermidis (strain ATCC 12228 / FDA PCI 1200).